Reading from the N-terminus, the 386-residue chain is 8-amino-7-oxononanoate synthase (386 aa).

Arg-31 is a binding site for substrate. 109 to 110 (GY) is a pyridoxal 5'-phosphate binding site. His-134 contacts substrate. Residues Ser-180, 205–208 (DEAH), and 236–239 (TLSK) contribute to the pyridoxal 5'-phosphate site. Lys-239 is modified (N6-(pyridoxal phosphate)lysine). Position 349 (Thr-349) interacts with substrate.

The protein belongs to the class-II pyridoxal-phosphate-dependent aminotransferase family. BioF subfamily. As to quaternary structure, homodimer. Pyridoxal 5'-phosphate serves as cofactor.

The catalysed reaction is 6-carboxyhexanoyl-[ACP] + L-alanine + H(+) = (8S)-8-amino-7-oxononanoate + holo-[ACP] + CO2. It functions in the pathway cofactor biosynthesis; biotin biosynthesis. Functionally, catalyzes the decarboxylative condensation of pimeloyl-[acyl-carrier protein] and L-alanine to produce 8-amino-7-oxononanoate (AON), [acyl-carrier protein], and carbon dioxide. The polypeptide is 8-amino-7-oxononanoate synthase (Mycobacterium bovis (strain ATCC BAA-935 / AF2122/97)).